A 194-amino-acid chain; its full sequence is Small ribosomal subunit protein eS7 (194 aa).

The protein belongs to the eukaryotic ribosomal protein eS7 family.

The polypeptide is Small ribosomal subunit protein eS7 (RpS7) (Drosophila yakuba (Fruit fly)).